The chain runs to 829 residues: Cadherin-16 (829 aa).

The signal sequence occupies residues 1–18 (MVPAWLWLLCFSVPQALV). Residues 19–786 (EVSPTTLHVE…MKGMPTKLSA (768 aa)) lie on the Extracellular side of the membrane. Cadherin domains follow at residues 25-126 (LHVE…VPQF), 131-235 (YSAR…SIVE), 242-336 (EPVH…APVC), 341-449 (PPVS…APEF), 455-564 (GPVS…PPRL), and 569-665 (YEAD…APAL). N-linked (GlcNAc...) asparagine glycosylation is found at N517, N602, and N722. Residues 666–786 (PLAPMPSRHL…MKGMPTKLSA (121 aa)) form an ectodomain G region. Residues 787 to 807 (VGILVGTLAAIGFFLILIFTH) form a helical membrane-spanning segment. Over 808-829 (LALARKKDLDAPADNVPLKAAA) the chain is Cytoplasmic.

In terms of tissue distribution, kidney specific. Limited to the basolateral membranes of renal tubular epithelial cells.

The protein localises to the cell membrane. Functionally, cadherins are calcium-dependent cell adhesion proteins. They preferentially interact with themselves in a homophilic manner in connecting cells; cadherins may thus contribute to the sorting of heterogeneous cell types. In Oryctolagus cuniculus (Rabbit), this protein is Cadherin-16 (CDH16).